Here is a 192-residue protein sequence, read N- to C-terminus: Small ribosomal subunit protein uS5 (192 aa).

The S5 DRBM domain maps to leucine 22–valine 85.

Belongs to the universal ribosomal protein uS5 family. Part of the 30S ribosomal subunit. Contacts proteins S4 and S8.

Functionally, with S4 and S12 plays an important role in translational accuracy. Located at the back of the 30S subunit body where it stabilizes the conformation of the head with respect to the body. This Gluconacetobacter diazotrophicus (strain ATCC 49037 / DSM 5601 / CCUG 37298 / CIP 103539 / LMG 7603 / PAl5) protein is Small ribosomal subunit protein uS5.